The primary structure comprises 496 residues: Probable ATP-dependent DNA helicase RecS (496 aa).

One can recognise a Helicase ATP-binding domain in the interval 25 to 192; sequence IESILSGKDT…MNLLELQHAV (168 aa). An ATP-binding site is contributed by 38–45; that stretch reads LPTGGGKS. The DEAH box motif lies at 136–139; sequence DEAH. The 145-residue stretch at 219-363 folds into the Helicase C-terminal domain; the sequence is RVIQLVENLQ…EIADVIRVLE (145 aa).

It belongs to the helicase family. RecQ subfamily. Interacts with SSB (ssbA) and YpbB.

It is found in the cytoplasm. It localises to the nucleoid. The enzyme catalyses Couples ATP hydrolysis with the unwinding of duplex DNA by translocating in the 3'-5' direction.. It carries out the reaction ATP + H2O = ADP + phosphate + H(+). In terms of biological role, probable 3'-5' DNA helicase. Required in synaptic and/or post-synaptic stages of recombination. Probably has an overlapping function with RecQ. It probably acts to help generate ss-DNA from ds-DNA breaks. The chain is Probable ATP-dependent DNA helicase RecS from Bacillus subtilis (strain 168).